The chain runs to 443 residues: Chromosome partition protein MukF (443 aa).

The tract at residues 209–237 (LDETSGNLRELQDTLNAAGDKLQAQLLRI) is leucine-zipper.

Belongs to the MukF family. As to quaternary structure, interacts, and probably forms a ternary complex, with MukE and MukB via its C-terminal region. The complex formation is stimulated by calcium or magnesium. It is required for an interaction between MukE and MukB.

The protein localises to the cytoplasm. The protein resides in the nucleoid. Its function is as follows. Involved in chromosome condensation, segregation and cell cycle progression. May participate in facilitating chromosome segregation by condensation DNA from both sides of a centrally located replisome during cell division. Not required for mini-F plasmid partitioning. Probably acts via its interaction with MukB and MukE. Overexpression results in anucleate cells. It has a calcium binding activity. This chain is Chromosome partition protein MukF, found in Actinobacillus pleuropneumoniae serotype 5b (strain L20).